The primary structure comprises 807 residues: Shutoff protein (807 aa).

The disordered stretch occupies residues 1–88; the sequence is MESVEKKDSL…QVGRGDERHG (88 aa). Polar residues predominate over residues 16–29; the sequence is FATTASTDAANAPT. Composition is skewed to basic and acidic residues over residues 59–70 and 79–88; these read RSVPTEDKKQDQ and QVGRGDERHG. Residues 280–345 form a binding to host EIF4G region; the sequence is VMSELIVRRA…AVLVTVELEC (66 aa). Residues 348–466 enclose the RRM domain; the sequence is RFFADPEMQR…DLWTAFNERS (119 aa). 2 positions are modified to phosphotyrosine; by host: Y365 and Y682. Positions 684–807 are disordered; sequence DPQSGEELNP…AGTARSPTQP (124 aa). Residues 726–743 are compositionally biased toward gly residues; that stretch reads GRGGILGQSGRGGFGRGG. A compositionally biased stretch (basic and acidic residues) spans 744–755; it reads GGHDGRLGEPRR. Basic residues predominate over residues 756–765; it reads GSFRGRRGVR.

Belongs to the adenoviridae shutoff protein family. As to quaternary structure, monomer. Interacts with hexon protein; this interaction allows chaperoning and trimerization of hexon proteins. Interacts (via N-terminus) with host initiation factor EIF4G (via C-terminus). Interacts (via RRM domain) with viral mRNAs that contain the tripartite leader; this interaction allows ribosome shunting and expression of viral late mRNAs. In terms of processing, might be cleaved by the viral protease. Phosphorylated. Tyrosine phosphorylation enhances preferential binding to tripartite leader mRNAs and allows ribosome shunting. Post-translationally, methylated. Asymmetric dimethylation by host PRMT1 of the Arg/Gly-rich region may regulate shutoff protein binding to hexon and promote the capsid assembly in the nucleus.

It localises to the host cytoplasm. Its function is as follows. Protein that inhibits host translation while promoting late viral translation by ribosome shunting. Blocks host cap-dependent translation by binding to eIF4G, displacing MKNK1 from cap initiation complexes and preventing EIF4E phosphorylation. Binds to the tripartite leader sequence of viral late mRNAs and recruits host eIF4G, PABPC1/poly-A binding protein and 40S ribosomes subunits on viral mRNAs, allowing ribosome shunting and efficient translation of late viral mRNAs even though conventional translation via ribosome scanning from the cap has been shut off in the host cell. During assembly, acts as a chaperone protein that helps hexon proteins assembly into trimers. The polypeptide is Shutoff protein (Homo sapiens (Human)).